Consider the following 330-residue polypeptide: Aspartate--ammonia ligase (330 aa).

The protein belongs to the class-II aminoacyl-tRNA synthetase family. AsnA subfamily.

The protein resides in the cytoplasm. The catalysed reaction is L-aspartate + NH4(+) + ATP = L-asparagine + AMP + diphosphate + H(+). It participates in amino-acid biosynthesis; L-asparagine biosynthesis; L-asparagine from L-aspartate (ammonia route): step 1/1. The chain is Aspartate--ammonia ligase from Salmonella paratyphi A (strain ATCC 9150 / SARB42).